The following is a 772-amino-acid chain: Nudix hydrolase 3 (772 aa).

The segment covering 1–14 (MAEEHFDVLTKSGE) has biased composition (basic and acidic residues). Residues 1–25 (MAEEHFDVLTKSGEKTGVSKPRGEV) form a disordered region. The Nudix hydrolase domain occupies 30 to 172 (DYHRAVHVWI…DPAYVPYDVN (143 aa)). Residues 69 to 90 (GHISAGDTSLLSAQRELEEELG) carry the Nudix box motif. Mg(2+) contacts are provided by glutamate 84 and glutamate 88.

Belongs to the Nudix hydrolase family. Mg(2+) is required as a cofactor. The cofactor is Mn(2+). Expressed in roots, stems and, at lower level, leaves.

In terms of biological role, probably mediates the hydrolysis of some nucleoside diphosphate derivatives. This Arabidopsis thaliana (Mouse-ear cress) protein is Nudix hydrolase 3 (NUDT3).